The primary structure comprises 500 residues: MKDFPIAISLLFALLSPVLLPCSGDSTGGVEDDSPATVCIVGSGIGGSSVAHFLRNYSVSTGLNQAKILMFERHEIVGGRMRTVTVAGDTFEAGGSILHPKNYHVKDFVERFNLTVRLPTPIEESSAIGIWDGKRFVVKTFGSGTKFPFLDTIVSWVNDLYLFLRYGLSLLRMSSFIENTVDNFLKYYESLESRPIFDNVEGMLKWSGLYNLTKLTLQEKLSEAQLSPLLVNELVTVITRINYGQSVLISGLAGAVSLAGSGGGLWSVEGGNWQMAAKLINHSDVTLHLNEKIESISYLENHYELKSTKGNSYKCDVTVVATPLDEVDIQFSPTISIPKRELQHTHTTFVRGLLNPGYFGMKSLSDVPALVGTLEDPLIPFSCISILRKYSKTDMTYKIFTRQPASDSLLDELFSRRTETVRIDWGAYPKYHAPEVFAPFILDDHHLYYVNAFENAASTMETSAVAGENIARLIISRFMTKESLSSSDKRSCSSGLHSDS.

The first 24 residues, 1–24 (MKDFPIAISLLFALLSPVLLPCSG), serve as a signal peptide directing secretion. Asparagine 56, asparagine 113, asparagine 211, and asparagine 281 each carry an N-linked (GlcNAc...) asparagine glycan.

It belongs to the prenylcysteine oxidase family. Requires FAD as cofactor. In terms of tissue distribution, expressed in seedilings, flowers, stems, leaves and roots.

It is found in the lysosome. It carries out the reaction S-(2E,6E)-farnesyl-L-cysteine + O2 + H2O = (2E,6E)-farnesal + L-cysteine + H2O2. Involved in the degradation of prenylcysteine. Cleaves specifically the thioether bond of S-farnesyl-L-cysteine and has no activity with S-geranylgeranyl-L-cysteine. Also recognizes N-acetyl-farnesylcysteine and may have a role in deprenylation of farnesylated proteins. This is Farnesylcysteine lyase from Arabidopsis thaliana (Mouse-ear cress).